The chain runs to 66 residues: Large ribosomal subunit protein uL29 (66 aa).

The protein belongs to the universal ribosomal protein uL29 family.

In Kosmotoga olearia (strain ATCC BAA-1733 / DSM 21960 / TBF 19.5.1), this protein is Large ribosomal subunit protein uL29.